The chain runs to 362 residues: Heat-inducible transcription repressor HrcA (362 aa).

This sequence belongs to the HrcA family.

Its function is as follows. Negative regulator of class I heat shock genes (grpE-dnaK-dnaJ and groELS operons). Prevents heat-shock induction of these operons. This Bradyrhizobium sp. (strain ORS 278) protein is Heat-inducible transcription repressor HrcA.